A 119-amino-acid polypeptide reads, in one-letter code: Ig heavy chain V region T601 (119 aa).

The Ig-like domain occupies 1–112 (EVKLLESGGG…GYFDVWGAGT (112 aa)).

The sequence is that of Ig heavy chain V region T601 from Mus musculus (Mouse).